A 239-amino-acid polypeptide reads, in one-letter code: Lactose-binding lectin-2 (239 aa).

The Mn(2+) site is built by E122 and D124. Residues D124, Y126, N128, and D131 each coordinate Ca(2+). D131 and H137 together coordinate Mn(2+).

It belongs to the leguminous lectin family. As to quaternary structure, homotetramer. Seed.

It localises to the vacuole. Its subcellular location is the aleurone grain. Lactose-binding lectin. Also binds derivatives of galactose, glucose, lactose, and mannose. Binds O-glycoproteins such as mucins more strongly than N-glycoproteins. Shows agglutinating activity towards rabbit erythrocytes. The polypeptide is Lactose-binding lectin-2 (Cymbosema roseum (Dioclea purpurea)).